We begin with the raw amino-acid sequence, 281 residues long: Protease HtpX homolog (281 aa).

The next 2 helical transmembrane spans lie at 6-26 (VWLL…AIGG) and 28-48 (SGAL…YYYS). H130 is a Zn(2+) binding site. E131 is an active-site residue. Residue H134 coordinates Zn(2+). 2 helical membrane-spanning segments follow: residues 140–160 (VLIG…SNIV) and 181–201 (IASL…QLAI). E206 is a Zn(2+) binding site.

Belongs to the peptidase M48B family. It depends on Zn(2+) as a cofactor.

It is found in the cell membrane. In Pelotomaculum thermopropionicum (strain DSM 13744 / JCM 10971 / SI), this protein is Protease HtpX homolog.